The primary structure comprises 460 residues: Photosystem II CP43 reaction center protein (460 aa).

A propeptide is located at residue Met-1. 5 helical membrane passes run 56 to 80, 121 to 142, 165 to 187, 242 to 262, and 278 to 299; these read LFET…PHLA, IVGP…RDKN, KALF…RFIT, RPFS…LSYS, and WYNN…ASQA. Glu-354 provides a ligand contact to [CaMn4O5] cluster. The chain crosses the membrane as a helical span at residues 434 to 458; the sequence is RARAAAAGFEKGINRENEPVLSMRP.

Belongs to the PsbB/PsbC family. PsbC subfamily. In terms of assembly, PSII is composed of 1 copy each of membrane proteins PsbA, PsbB, PsbC, PsbD, PsbE, PsbF, PsbH, PsbI, PsbJ, PsbK, PsbL, PsbM, PsbT, PsbY, PsbZ, Psb30/Ycf12, at least 3 peripheral proteins of the oxygen-evolving complex and a large number of cofactors. It forms dimeric complexes. It depends on Binds multiple chlorophylls and provides some of the ligands for the Ca-4Mn-5O cluster of the oxygen-evolving complex. It may also provide a ligand for a Cl- that is required for oxygen evolution. PSII binds additional chlorophylls, carotenoids and specific lipids. as a cofactor.

It localises to the plastid. The protein resides in the chloroplast thylakoid membrane. Its function is as follows. One of the components of the core complex of photosystem II (PSII). It binds chlorophyll and helps catalyze the primary light-induced photochemical processes of PSII. PSII is a light-driven water:plastoquinone oxidoreductase, using light energy to abstract electrons from H(2)O, generating O(2) and a proton gradient subsequently used for ATP formation. This Cyanidium caldarium (Red alga) protein is Photosystem II CP43 reaction center protein.